Consider the following 581-residue polypeptide: Tail sheath protein (581 aa).

The protein belongs to the myoviridae tail sheath protein family. In terms of assembly, homomultimer.

It is found in the virion. The protein resides in the host cytoplasm. Functionally, polymerizes as an extended structure around the baseplate-tail tube complex. During ejection, the sheath shifts to a contracted form, thereby making the inner tail tube protrude through the host cell envelope. This is Tail sheath protein from Mycobacterium phage Bxz1 (Mycobacteriophage Bxz1).